Here is a 187-residue protein sequence, read N- to C-terminus: Calcium and integrin-binding family member 2 (187 aa).

EF-hand domains are found at residues 66–101 (RENPFKERIVAAFSEDGEGNLTFNDFVDMFSVLCES), 103–138 (PRELKANYAFKIYDFNTDNFICKEDLELTLARLTKS), and 144–179 (EVVLVCDKVIEEADLDGDGKLGFADFEDMIAKAPDF). Residues aspartate 116, asparagine 118, aspartate 120, aspartate 127, aspartate 157, aspartate 159, aspartate 161, lysine 163, and aspartate 168 each coordinate Ca(2+).

As to quaternary structure, monomer. Homodimer. Interacts with WHRN and MYO7A. Interacts with ITGA2B (via C-terminus cytoplasmic tail region); the interactions are stabilized/increased in a calcium and magnesium-dependent manner. Interacts with ITGA7 (via C-terminus cytoplasmic tail region); the interactions are stabilized/increased in a calcium and magnesium-dependent manner. Interacts with TMC1. Interacts with TMC2. In terms of tissue distribution, widely expressed.

The protein resides in the cytoplasm. It is found in the cell projection. Its subcellular location is the stereocilium. The protein localises to the photoreceptor inner segment. It localises to the cilium. The protein resides in the photoreceptor outer segment. It is found in the cell membrane. Its subcellular location is the sarcolemma. Its function is as follows. Calcium- and integrin-binding protein that plays a role in intracellular calcium homeostasis. Acts as an auxiliary subunit of the sensory mechanoelectrical transduction (MET) channel in hair cells. Essential for mechanoelectrical transduction (MET) currents in auditory hair cells and thereby required for hearing. Regulates the function of hair cell mechanotransduction by controlling the distribution of transmembrane channel-like proteins TMC1 and TMC2, and by regulating the function of the MET channels in hair cells. Required for the maintenance of auditory hair cell stereocilia bundle morphology and function and for hair-cell survival in the cochlea. Critical for proper photoreceptor cell maintenance and function. Plays a role in intracellular calcium homeostasis by decreasing ATP-induced calcium release. The protein is Calcium and integrin-binding family member 2 (CIB2) of Homo sapiens (Human).